Consider the following 359-residue polypeptide: UDP-N-acetylglucosamine--N-acetylmuramyl-(pentapeptide) pyrophosphoryl-undecaprenol N-acetylglucosamine transferase (359 aa).

UDP-N-acetyl-alpha-D-glucosamine is bound by residues 15–17 (TGG), asparagine 127, arginine 166, serine 191, isoleucine 245, 264–269 (ALTVSE), and glutamine 290.

Belongs to the glycosyltransferase 28 family. MurG subfamily.

It localises to the cell inner membrane. It carries out the reaction di-trans,octa-cis-undecaprenyl diphospho-N-acetyl-alpha-D-muramoyl-L-alanyl-D-glutamyl-meso-2,6-diaminopimeloyl-D-alanyl-D-alanine + UDP-N-acetyl-alpha-D-glucosamine = di-trans,octa-cis-undecaprenyl diphospho-[N-acetyl-alpha-D-glucosaminyl-(1-&gt;4)]-N-acetyl-alpha-D-muramoyl-L-alanyl-D-glutamyl-meso-2,6-diaminopimeloyl-D-alanyl-D-alanine + UDP + H(+). It participates in cell wall biogenesis; peptidoglycan biosynthesis. In terms of biological role, cell wall formation. Catalyzes the transfer of a GlcNAc subunit on undecaprenyl-pyrophosphoryl-MurNAc-pentapeptide (lipid intermediate I) to form undecaprenyl-pyrophosphoryl-MurNAc-(pentapeptide)GlcNAc (lipid intermediate II). In Pseudomonas putida (strain ATCC 700007 / DSM 6899 / JCM 31910 / BCRC 17059 / LMG 24140 / F1), this protein is UDP-N-acetylglucosamine--N-acetylmuramyl-(pentapeptide) pyrophosphoryl-undecaprenol N-acetylglucosamine transferase.